A 200-amino-acid polypeptide reads, in one-letter code: Large ribosomal subunit protein uL4 (200 aa).

Residues 44 to 71 (AQKTRAEVSGGGKKPWRQKGTGRARAGS) are disordered.

It belongs to the universal ribosomal protein uL4 family. In terms of assembly, part of the 50S ribosomal subunit.

One of the primary rRNA binding proteins, this protein initially binds near the 5'-end of the 23S rRNA. It is important during the early stages of 50S assembly. It makes multiple contacts with different domains of the 23S rRNA in the assembled 50S subunit and ribosome. Functionally, forms part of the polypeptide exit tunnel. The chain is Large ribosomal subunit protein uL4 from Psychrobacter sp. (strain PRwf-1).